Here is a 144-residue protein sequence, read N- to C-terminus: Gonadotropin subunit beta-2 (144 aa).

A signal peptide spans 1–27 (MGTPVKILVVRNHILFSVVVLLAVAQS). Cystine bridges form between Cys-33–Cys-81, Cys-47–Cys-96, Cys-50–Cys-134, Cys-58–Cys-112, Cys-62–Cys-114, and Cys-117–Cys-124. N-linked (GlcNAc...) asparagine glycosylation is present at Asn-37. The propeptide occupies 143–144 (VY).

The protein belongs to the glycoprotein hormones subunit beta family. In terms of assembly, heterodimer of an alpha and a beta chain.

The protein localises to the secreted. In terms of biological role, involved in gametogenesis and steroidogenesis. This Cyprinus carpio (Common carp) protein is Gonadotropin subunit beta-2 (cgbb).